The chain runs to 319 residues: Aminoimidazole riboside kinase (319 aa).

5-amino-1-(beta-D-ribosyl)imidazole contacts are provided by Asp-16, Gly-31, and Tyr-101. Asp-158 to Asn-160 contributes to the ATP binding site. Arg-162 serves as a coordination point for 5-amino-1-(beta-D-ribosyl)imidazole. K(+) is bound by residues Ala-180, Ala-181, and Ala-183. ATP contacts are provided by Lys-187 and Glu-192. Gly-213 lines the K(+) pocket. Ser-220–Gly-225 serves as a coordination point for ATP. K(+) is bound by residues Asp-246 and Thr-248. Residue Asp-252 participates in 5-amino-1-(beta-D-ribosyl)imidazole binding. Residue Asp-252 is the Proton acceptor of the active site. Residue Asn-281 coordinates ATP. The K(+) site is built by Ala-287, Ala-290, and Gly-292.

It belongs to the carbohydrate kinase PfkB family. As to quaternary structure, homodimer.

The catalysed reaction is 5-amino-1-(beta-D-ribosyl)imidazole + ATP = 5-amino-1-(5-phospho-beta-D-ribosyl)imidazole + ADP + H(+). Potassium may regulate kinase activity. Functionally, phosphorylates 5-amino-1-(beta-D-ribosyl)imidazole (AIRs) to form 5-amino-1-(5-phospho-beta-D-ribosyl)imidazole (AIR), an important intermediate in the purine and thiamine biosynthetic pathways. It allows the use of exogenous aminoimidazole riboside (AIRs) to satisfy the cellular requirement for purines and thiamine. This Salmonella typhimurium (strain LT2 / SGSC1412 / ATCC 700720) protein is Aminoimidazole riboside kinase.